Here is a 549-residue protein sequence, read N- to C-terminus: Guanine nucleotide-binding protein-like 3 (549 aa).

Over residues 1-45 (MKRPKLKKASKRMTCHKRYKIQKKVREHHRKLRKEAKKRGHKKPR) the composition is skewed to basic residues. Disordered stretches follow at residues 1–56 (MKRP…SAPF) and 73–104 (ELKQ…SNVE). Residues 2–46 (KRPKLKKASKRMTCHKRYKIQKKVREHHRKLRKEAKKRGHKKPRK) are basic. Residues 56–95 (FKEALLREAELRKQRLEELKQQQKLDRQKELEKKRKLETN) are a coiled coil. The span at 73 to 96 (ELKQQQKLDRQKELEKKRKLETNP) shows a compositional bias: basic and acidic residues. K79 bears the N6-acetyllysine mark. Glycyl lysine isopeptide (Lys-Gly) (interchain with G-Cter in SUMO2) cross-links involve residues K91 and K99. Position 101 is a phosphoserine (S101). Glycyl lysine isopeptide (Lys-Gly) (interchain with G-Cter in SUMO2) cross-links involve residues K114, K179, K196, K253, K267, and K275. In terms of domain architecture, CP-type G spans 131–312 (CQELKKVIEA…IIDSPSFIVS (182 aa)). Residue 178-181 (NKSD) participates in GTP binding. 261 to 268 (GFPNVGKS) is a GTP binding site. The interval 282-456 (VGVSMGLTRS…HLANSILFQS (175 aa)) is intermediate. 305 to 308 (DSPS) provides a ligand contact to GTP. Positions 465–543 (EEKDIHEELP…KIIEEDDAYD (79 aa)) are acidic. The span at 474 to 483 (PKRKERKQEE) shows a compositional bias: basic and acidic residues. The segment at 474–532 (PKRKERKQEEREDDKDSDQETVDEEVDENSSGMFAAEETGEALSEETTAGEQSTRSFIL) is disordered. The segment covering 484-501 (REDDKDSDQETVDEEVDE) has biased composition (acidic residues). Phosphoserine occurs at positions 490, 504, 517, and 529. The span at 518 to 529 (EETTAGEQSTRS) shows a compositional bias: polar residues.

This sequence belongs to the TRAFAC class YlqF/YawG GTPase family. Interacts with MDM2; this interaction stabilizes MDM2. Interaction with MDM2 occurs in the nucleoplasm and is triggered by a nucleolar release mechanism, such as mitosis-induced nucleolar disassembly. Indirectly interacts with TP53, via MDM2-binding. Interacts with TSC22D1 isoform 2. As to expression, increased levels in lung tissue in cancer patients.

It localises to the nucleus. Its subcellular location is the nucleolus. Functionally, may be required to maintain the proliferative capacity of stem cells. Stabilizes MDM2 by preventing its ubiquitination, and hence proteasomal degradation. The sequence is that of Guanine nucleotide-binding protein-like 3 (GNL3) from Homo sapiens (Human).